Reading from the N-terminus, the 766-residue chain is Alpha-onocerin synthase LCD (766 aa).

PFTB repeat units lie at residues 101–143 (LCRA…GALD), 151–192 (QREI…RLMG), 456–507 (QESY…STTD), 517–558 (IHEC…PGYK), 594–634 (IQEG…LASG), 643–684 (IQRA…HVVH), and 705–752 (LHRA…WALG). The active-site Proton donor is the Asp-488.

Belongs to the terpene cyclase/mutase family.

It catalyses the reaction pre-alpha-onocerin = alpha-onocerin. Its pathway is secondary metabolite biosynthesis; terpenoid biosynthesis. Functionally, oxidosqualene cyclase involved in the biosynthesis of alpha-onocerin, a triterpenoid characterized by a symmetrical structure due to cyclizations at both termini of dioxidosqualene that inhibits acetylcholinesterase. Catalyzes the second half of the cyclization, exclusively from pre-alpha-onocerin. This Lycopodium clavatum (Stag's-horn clubmoss) protein is Alpha-onocerin synthase LCD.